Here is a 221-residue protein sequence, read N- to C-terminus: MDYLTHKLLDPTRAKSCIQSIQRDQSLWKDGKSTAGLYASKVKNNLQLDKKSKVSIDNSNLIIKAIISDLLVKSFTIPRKVHGVMFSKSSKGNSYGMHLDNAYMSTGRSDLSFTLFLSDPGEYEGGELAIETIQETRKIKLPQGHIIIYPSTTLHSVEEVTSGTRIVCVGWIQSYIPNNEDRKILFSLDAGAKGLLAAHGQSHELDLVFQSYNNLLRRLGG.

One can recognise a Fe2OG dioxygenase domain in the interval 80 to 174; sequence KVHGVMFSKS…RIVCVGWIQS (95 aa). 3 residues coordinate Fe cation: H98, D100, and H155. R165 contributes to the 2-oxoglutarate binding site.

It depends on Fe(2+) as a cofactor. Requires L-ascorbate as cofactor.

This is PKHD-type hydroxylase Pro_1271 from Prochlorococcus marinus (strain SARG / CCMP1375 / SS120).